Here is a 63-residue protein sequence, read N- to C-terminus: Iota-crystallin (63 aa).

Belongs to the calycin superfamily. Fatty-acid binding protein (FABP) family.

Functionally, binds vitamin A2 in the eye lens and thus functions as a UV filter. Intracellular transport of retinol. The chain is Iota-crystallin (CRBPI) from Gonatodes vittatus (Wiegmann's striped gecko).